The chain runs to 473 residues: Glutamine synthetase (473 aa).

In terms of domain architecture, GS beta-grasp spans 18–102 (NNIKWVDLQF…VLTKVFWGGG (85 aa)). The GS catalytic domain maps to 110–473 (PRGIAEEAEK…PMEIYQYLDS (364 aa)). Glutamate 133 and glutamate 135 together coordinate Mg(2+). Glutamate 207 lines the ATP pocket. The Mg(2+) site is built by glutamate 212 and glutamate 220. Residues 264–265 (NG) and glycine 265 each bind L-glutamate. Histidine 269 lines the Mg(2+) pocket. ATP-binding positions include 271–273 (HFS) and serine 273. The L-glutamate site is built by arginine 324, glutamate 330, and arginine 342. Residues arginine 342, arginine 347, and lysine 357 each coordinate ATP. Glutamate 362 provides a ligand contact to Mg(2+). Arginine 364 serves as a coordination point for L-glutamate.

Belongs to the glutamine synthetase family. Oligomer of 12 subunits arranged in the form of two hexagons. The cofactor is Mg(2+). It depends on Mn(2+) as a cofactor.

Its subcellular location is the cytoplasm. The enzyme catalyses L-glutamate + NH4(+) + ATP = L-glutamine + ADP + phosphate + H(+). Its activity is regulated as follows. Strongly inhibited by glycine and L-alanine. AMP at 10 mM displays a very weak inhibitory effect. The activity of this enzyme is not controlled by adenylation. In terms of biological role, probably involved in nitrogen metabolism via ammonium assimilation. Catalyzes the ATP-dependent biosynthesis of glutamine from glutamate and ammonia. This chain is Glutamine synthetase, found in Sulfolobus acidocaldarius (strain ATCC 33909 / DSM 639 / JCM 8929 / NBRC 15157 / NCIMB 11770).